The chain runs to 176 residues: MINDTISDMLTRIRNASIVRKKSVLIPYTKMNLKIAEILEKEGYILSFEINTNKAISITKKTSETNLRMLKIYLKYYKKYKTNFYKLNVIKNKKALSDFKNLIKLLKGKQGNKKTPCITNLKRISKPGLRIYVNHKELPRVLAGTGIYILSTSKGILTDREARFRGIGGEVLCSVW.

Belongs to the universal ribosomal protein uS8 family. In terms of assembly, part of the 30S ribosomal subunit.

It is found in the plastid. The protein resides in the chloroplast. Its function is as follows. One of the primary rRNA binding proteins, it binds directly to 16S rRNA central domain where it helps coordinate assembly of the platform of the 30S subunit. The protein is Small ribosomal subunit protein uS8c (rps8) of Stigeoclonium helveticum (Green alga).